The primary structure comprises 1193 residues: Pyruvate carboxylase (1193 aa).

Positions 41–493 (QFQKILVANR…WTTFIDDTTE (453 aa)) constitute a Biotin carboxylation domain. The ATP site is built by Lys159, Glu243, and His278. Residues 163–360 (RQLAIRCNVP…IVAAQIQIAA (198 aa)) enclose the ATP-grasp domain. The active site involves Arg335. Positions 579–847 (CLIMDTTWRD…DPGLNSAHVR (269 aa)) constitute a Pyruvate carboxyltransferase domain. Substrate contacts are provided by residues 587–591 (RDAHQ) and Arg660. Asp588 provides a ligand contact to a divalent metal cation. Residues Lys756, His786, and His788 each contribute to the a divalent metal cation site. Residue Lys756 is modified to N6-carboxylysine. Thr921 is a substrate binding site. In terms of domain architecture, Biotinyl-binding spans 1116–1191 (KADVGDSSQV…DGQDLVCKIT (76 aa)). The residue at position 1157 (Lys1157) is an N6-biotinyllysine.

Biotin is required as a cofactor. It depends on Zn(2+) as a cofactor.

It localises to the cytoplasm. The enzyme catalyses hydrogencarbonate + pyruvate + ATP = oxaloacetate + ADP + phosphate + H(+). It functions in the pathway carbohydrate biosynthesis; gluconeogenesis. In terms of biological role, pyruvate carboxylase catalyzes a 2-step reaction, involving the ATP-dependent carboxylation of the covalently attached biotin in the first step and the transfer of the carboxyl group to pyruvate in the second. The polypeptide is Pyruvate carboxylase (pyc) (Aspergillus terreus (strain NIH 2624 / FGSC A1156)).